Reading from the N-terminus, the 404-residue chain is Calcium/calmodulin-dependent protein kinase cmkB (404 aa).

Positions 18–279 (YKTGKTLGAG…AHQALQHPWI (262 aa)) constitute a Protein kinase domain. ATP-binding positions include 24–32 (LGAGLYSVV) and K47. Residue D141 is the Proton acceptor of the active site. The residue at position 179 (T179) is a Phosphothreonine; by cmkC. An autoinhibitory domain region spans residues 279-322 (INPPYDTTDDLGSGEDLLPNIKKNFNARRTLHKAIDTVRAINKL). Positions 301–323 (KNFNARRTLHKAIDTVRAINKLR) are calmodulin-binding. The segment at 336 to 404 (VDPKPEHVNG…WSRTAPRSER (69 aa)) is disordered. Basic and acidic residues-rich tracts occupy residues 338 to 370 (PKPEHVNGSEVVEDRTTPRERENEDAMEIDSRS) and 379 to 389 (QIREQERKVKE).

This sequence belongs to the protein kinase superfamily. CAMK Ser/Thr protein kinase family. CaMK subfamily. Post-translationally, phosphorylated by cmkC on Thr-179.

The enzyme catalyses L-seryl-[protein] + ATP = O-phospho-L-seryl-[protein] + ADP + H(+). It catalyses the reaction L-threonyl-[protein] + ATP = O-phospho-L-threonyl-[protein] + ADP + H(+). Its activity is regulated as follows. Activated by Ca(2+)/calmodulin. Binding of calmodulin results in conformational change that relieves intrasteric autoinhibition and allows phosphorylation of Thr-179 within the activation loop by cmkC. Calcium/calmodulin-dependent protein kinase that operates in the calcium-triggered CaMKK-CaMK1 signaling cascade. Required in G1-phase of the cell cycle for proper timing of the initial nuclear division after germination, but not for subsequent mitoses. Required for the normal temporal regulation of nimX activity. The protein is Calcium/calmodulin-dependent protein kinase cmkB of Emericella nidulans (Aspergillus nidulans).